Reading from the N-terminus, the 247-residue chain is CDP-diacylglycerol pyrophosphatase (247 aa).

A helical membrane pass occupies residues 5–22 (IVLALVVSVAVAGGWLWM).

The protein belongs to the Cdh family.

Its subcellular location is the cell inner membrane. The enzyme catalyses a CDP-1,2-diacyl-sn-glycerol + H2O = a 1,2-diacyl-sn-glycero-3-phosphate + CMP + 2 H(+). It participates in phospholipid metabolism; CDP-diacylglycerol degradation; phosphatidate from CDP-diacylglycerol: step 1/1. This is CDP-diacylglycerol pyrophosphatase from Enterobacter sp. (strain 638).